The sequence spans 128 residues: Small ribosomal subunit protein uS9 (128 aa).

Positions 97 to 113 (RSEGFMTRDSRSVERKK) are enriched in basic and acidic residues. The interval 97 to 128 (RSEGFMTRDSRSVERKKPGQPKARRRFQFSKR) is disordered. The segment covering 114–128 (PGQPKARRRFQFSKR) has biased composition (basic residues).

This sequence belongs to the universal ribosomal protein uS9 family.

This Phocaeicola vulgatus (strain ATCC 8482 / DSM 1447 / JCM 5826 / CCUG 4940 / NBRC 14291 / NCTC 11154) (Bacteroides vulgatus) protein is Small ribosomal subunit protein uS9.